Here is a 276-residue protein sequence, read N- to C-terminus: Large ribosomal subunit protein uL2 (276 aa).

2 disordered regions span residues 30 to 52 (VKGL…TTSR) and 224 to 257 (VMNP…KGYK). A compositionally biased stretch (polar residues) spans 41–52 (GGRNNHGRTTSR).

The protein belongs to the universal ribosomal protein uL2 family. Part of the 50S ribosomal subunit. Forms a bridge to the 30S subunit in the 70S ribosome.

In terms of biological role, one of the primary rRNA binding proteins. Required for association of the 30S and 50S subunits to form the 70S ribosome, for tRNA binding and peptide bond formation. It has been suggested to have peptidyltransferase activity; this is somewhat controversial. Makes several contacts with the 16S rRNA in the 70S ribosome. The polypeptide is Large ribosomal subunit protein uL2 (Gluconacetobacter diazotrophicus (strain ATCC 49037 / DSM 5601 / CCUG 37298 / CIP 103539 / LMG 7603 / PAl5)).